Reading from the N-terminus, the 482-residue chain is Membrane-bound lytic murein transglycosylase F (482 aa).

Residues 1-18 (MKGLFIRIVLAICLSLWA) form the signal peptide. A non-LT domain region spans residues 19–266 (IDMVFPWQQI…RIEEKYFNHL (248 aa)). Residues 267-482 (NQFDYVDTRS…ISTQTQQEQR (216 aa)) form an LT domain region. Residue Glu311 is part of the active site.

The protein in the N-terminal section; belongs to the bacterial solute-binding protein 3 family. It in the C-terminal section; belongs to the transglycosylase Slt family.

Its subcellular location is the cell outer membrane. It catalyses the reaction Exolytic cleavage of the (1-&gt;4)-beta-glycosidic linkage between N-acetylmuramic acid (MurNAc) and N-acetylglucosamine (GlcNAc) residues in peptidoglycan, from either the reducing or the non-reducing ends of the peptidoglycan chains, with concomitant formation of a 1,6-anhydrobond in the MurNAc residue.. Its function is as follows. Murein-degrading enzyme that degrades murein glycan strands and insoluble, high-molecular weight murein sacculi, with the concomitant formation of a 1,6-anhydromuramoyl product. Lytic transglycosylases (LTs) play an integral role in the metabolism of the peptidoglycan (PG) sacculus. Their lytic action creates space within the PG sacculus to allow for its expansion as well as for the insertion of various structures such as secretion systems and flagella. This chain is Membrane-bound lytic murein transglycosylase F, found in Histophilus somni (strain 129Pt) (Haemophilus somnus).